The chain runs to 167 residues: Phosphopantetheine adenylyltransferase (167 aa).

T10 contributes to the substrate binding site. ATP-binding positions include 10-11 (TF) and H18. K42, L75, and R89 together coordinate substrate. ATP contacts are provided by residues 90–92 (GVR), E100, and 125–131 (YTYVASS).

The protein belongs to the bacterial CoaD family. As to quaternary structure, homohexamer. Mg(2+) is required as a cofactor.

It localises to the cytoplasm. It carries out the reaction (R)-4'-phosphopantetheine + ATP + H(+) = 3'-dephospho-CoA + diphosphate. The protein operates within cofactor biosynthesis; coenzyme A biosynthesis; CoA from (R)-pantothenate: step 4/5. In terms of biological role, reversibly transfers an adenylyl group from ATP to 4'-phosphopantetheine, yielding dephospho-CoA (dPCoA) and pyrophosphate. This Chlorobium phaeobacteroides (strain DSM 266 / SMG 266 / 2430) protein is Phosphopantetheine adenylyltransferase.